Here is a 254-residue protein sequence, read N- to C-terminus: 5-oxoprolinase subunit A (254 aa).

The protein belongs to the LamB/PxpA family. Forms a complex composed of PxpA, PxpB and PxpC.

It catalyses the reaction 5-oxo-L-proline + ATP + 2 H2O = L-glutamate + ADP + phosphate + H(+). In terms of biological role, catalyzes the cleavage of 5-oxoproline to form L-glutamate coupled to the hydrolysis of ATP to ADP and inorganic phosphate. The protein is 5-oxoprolinase subunit A of Rhodopseudomonas palustris (strain BisB5).